Reading from the N-terminus, the 348-residue chain is DNA-directed RNA polymerase subunit alpha (348 aa).

The tract at residues 1–243 is alpha N-terminal domain (alpha-NTD); that stretch reads MLIKQGDRLI…DQISVFINFD (243 aa). Residues 260–348 are alpha C-terminal domain (alpha-CTD); that stretch reads VNENLFKGID…WLKRKQQNEA (89 aa).

Belongs to the RNA polymerase alpha chain family. Homodimer. The RNAP catalytic core consists of 2 alpha, 1 beta, 1 beta' and 1 omega subunit. When a sigma factor is associated with the core the holoenzyme is formed, which can initiate transcription.

It catalyses the reaction RNA(n) + a ribonucleoside 5'-triphosphate = RNA(n+1) + diphosphate. In terms of biological role, DNA-dependent RNA polymerase catalyzes the transcription of DNA into RNA using the four ribonucleoside triphosphates as substrates. In Oleidesulfovibrio alaskensis (strain ATCC BAA-1058 / DSM 17464 / G20) (Desulfovibrio alaskensis), this protein is DNA-directed RNA polymerase subunit alpha.